The following is a 192-amino-acid chain: dTTP/UTP pyrophosphatase (192 aa).

The active-site Proton acceptor is Asp-70.

Belongs to the Maf family. YhdE subfamily. Requires a divalent metal cation as cofactor.

It localises to the cytoplasm. It carries out the reaction dTTP + H2O = dTMP + diphosphate + H(+). The enzyme catalyses UTP + H2O = UMP + diphosphate + H(+). Functionally, nucleoside triphosphate pyrophosphatase that hydrolyzes dTTP and UTP. May have a dual role in cell division arrest and in preventing the incorporation of modified nucleotides into cellular nucleic acids. The polypeptide is dTTP/UTP pyrophosphatase (Alkaliphilus metalliredigens (strain QYMF)).